Consider the following 913-residue polypeptide: Protein translocase subunit SecA (913 aa).

ATP is bound by residues Gln-87, 105 to 109 (GEGKT), and Asp-512. Positions 864 to 913 (LDQPEEEPAEVEGQPDVAVASVRTEPKIGRNEPCPCGSGKKYKHCHGQVQ) are disordered. The Zn(2+) site is built by Cys-897, Cys-899, Cys-908, and His-909. Positions 903-913 (KKYKHCHGQVQ) are enriched in basic residues.

Belongs to the SecA family. In terms of assembly, monomer and homodimer. Part of the essential Sec protein translocation apparatus which comprises SecA, SecYEG and auxiliary proteins SecDF-YajC and YidC. Requires Zn(2+) as cofactor.

Its subcellular location is the cell inner membrane. The protein resides in the cytoplasm. The catalysed reaction is ATP + H2O + cellular proteinSide 1 = ADP + phosphate + cellular proteinSide 2.. Part of the Sec protein translocase complex. Interacts with the SecYEG preprotein conducting channel. Has a central role in coupling the hydrolysis of ATP to the transfer of proteins into and across the cell membrane, serving both as a receptor for the preprotein-SecB complex and as an ATP-driven molecular motor driving the stepwise translocation of polypeptide chains across the membrane. The sequence is that of Protein translocase subunit SecA from Stutzerimonas stutzeri (strain A1501) (Pseudomonas stutzeri).